We begin with the raw amino-acid sequence, 243 residues long: MSGHSKWSTIKRKKGALDAKRNKIFTKLIREITIAAKIGGGDIESNPRLRVAVNKAKVANMPKDNIEKAIKKGIGGNEGVEYFEITYEAYAPYGVALMIKCLTDNKNRTSSDVKSVLAKGGGSLGTPGSVSYMFYRKGLIVYNLEKYLEDEIMEFALEVGAEDILVSNNEAEVITSPDDFDKVLSFLKTKFKEEVAEIALIPENKISLNKDQAEKIILLVEKLEDFDDVQEVIHNLEIPEELS.

It belongs to the TACO1 family.

Its subcellular location is the cytoplasm. The sequence is that of Probable transcriptional regulatory protein BB_0025 from Borreliella burgdorferi (strain ATCC 35210 / DSM 4680 / CIP 102532 / B31) (Borrelia burgdorferi).